We begin with the raw amino-acid sequence, 230 residues long: Phosphoenolpyruvate guanylyltransferase (230 aa).

Residues T139, G155, and S158 each contribute to the phosphoenolpyruvate site.

It belongs to the CofC family.

It catalyses the reaction phosphoenolpyruvate + GTP + H(+) = enolpyruvoyl-2-diphospho-5'-guanosine + diphosphate. Its pathway is cofactor biosynthesis; coenzyme F420 biosynthesis. Guanylyltransferase that catalyzes the activation of phosphoenolpyruvate (PEP) as enolpyruvoyl-2-diphospho-5'-guanosine, via the condensation of PEP with GTP. It is involved in the biosynthesis of coenzyme F420, a hydride carrier cofactor. This Thermobaculum terrenum (strain ATCC BAA-798 / CCMEE 7001 / YNP1) protein is Phosphoenolpyruvate guanylyltransferase.